A 267-amino-acid polypeptide reads, in one-letter code: Large ribosomal subunit protein bL9m (267 aa).

The N-terminal 52 residues, 1–52 (MAAPVVTAPGRALLRAGAGRLLRGGVQELLRPRHEGNAPDLACNFSLSQNRG), are a transit peptide targeting the mitochondrion.

The protein belongs to the bacterial ribosomal protein bL9 family. As to quaternary structure, component of the mitochondrial large ribosomal subunit (mt-LSU). Mature mammalian 55S mitochondrial ribosomes consist of a small (28S) and a large (39S) subunit. The 28S small subunit contains a 12S ribosomal RNA (12S mt-rRNA) and 30 different proteins. The 39S large subunit contains a 16S rRNA (16S mt-rRNA), a copy of mitochondrial valine transfer RNA (mt-tRNA(Val)), which plays an integral structural role, and 52 different proteins.

It is found in the mitochondrion. The sequence is that of Large ribosomal subunit protein bL9m (MRPL9) from Homo sapiens (Human).